Here is a 359-residue protein sequence, read N- to C-terminus: Phospho-N-acetylmuramoyl-pentapeptide-transferase (359 aa).

10 consecutive transmembrane segments (helical) span residues 3 to 23 (QILI…PVLI), 55 to 75 (VAIL…GLAF), 80 to 100 (IGAS…VGFI), 117 to 137 (TAKT…VLQF), 156 to 176 (IATV…IVSA), 187 to 207 (LDGL…LITF), 231 to 251 (LALI…WNAA), 255 to 275 (IFMG…LSVT), 280 to 300 (ILAV…VLQI), and 334 to 354 (FWLL…GEWL).

It belongs to the glycosyltransferase 4 family. MraY subfamily. It depends on Mg(2+) as a cofactor.

It is found in the cell membrane. The enzyme catalyses UDP-N-acetyl-alpha-D-muramoyl-L-alanyl-gamma-D-glutamyl-meso-2,6-diaminopimeloyl-D-alanyl-D-alanine + di-trans,octa-cis-undecaprenyl phosphate = di-trans,octa-cis-undecaprenyl diphospho-N-acetyl-alpha-D-muramoyl-L-alanyl-D-glutamyl-meso-2,6-diaminopimeloyl-D-alanyl-D-alanine + UMP. The protein operates within cell wall biogenesis; peptidoglycan biosynthesis. Its function is as follows. Catalyzes the initial step of the lipid cycle reactions in the biosynthesis of the cell wall peptidoglycan: transfers peptidoglycan precursor phospho-MurNAc-pentapeptide from UDP-MurNAc-pentapeptide onto the lipid carrier undecaprenyl phosphate, yielding undecaprenyl-pyrophosphoryl-MurNAc-pentapeptide, known as lipid I. This chain is Phospho-N-acetylmuramoyl-pentapeptide-transferase, found in Mycobacterium tuberculosis (strain ATCC 25177 / H37Ra).